A 457-amino-acid chain; its full sequence is Glutamate--tRNA ligase 1 (457 aa).

A 'HIGH' region motif is present at residues 9–19 (PSPTGYIHIGN). Residues 250-254 (GLSKR) carry the 'KMSKS' region motif. An ATP-binding site is contributed by K253.

It belongs to the class-I aminoacyl-tRNA synthetase family. Glutamate--tRNA ligase type 1 subfamily. As to quaternary structure, monomer.

The protein localises to the cytoplasm. It catalyses the reaction tRNA(Glu) + L-glutamate + ATP = L-glutamyl-tRNA(Glu) + AMP + diphosphate. Its function is as follows. Catalyzes the attachment of glutamate to tRNA(Glu) in a two-step reaction: glutamate is first activated by ATP to form Glu-AMP and then transferred to the acceptor end of tRNA(Glu). In Brucella canis (strain ATCC 23365 / NCTC 10854 / RM-666), this protein is Glutamate--tRNA ligase 1.